Consider the following 292-residue polypeptide: Diaminopimelate epimerase (292 aa).

2 residues coordinate substrate: asparagine 14 and asparagine 78. Cysteine 87 serves as the catalytic Proton donor. Residues 88 to 89 (GN), asparagine 164, asparagine 197, and 221 to 222 (ER) each bind substrate. Cysteine 230 functions as the Proton acceptor in the catalytic mechanism. 231 to 232 (GT) serves as a coordination point for substrate.

It belongs to the diaminopimelate epimerase family. As to quaternary structure, homodimer.

The protein resides in the cytoplasm. It catalyses the reaction (2S,6S)-2,6-diaminopimelate = meso-2,6-diaminopimelate. It functions in the pathway amino-acid biosynthesis; L-lysine biosynthesis via DAP pathway; DL-2,6-diaminopimelate from LL-2,6-diaminopimelate: step 1/1. In terms of biological role, catalyzes the stereoinversion of LL-2,6-diaminopimelate (L,L-DAP) to meso-diaminopimelate (meso-DAP), a precursor of L-lysine and an essential component of the bacterial peptidoglycan. In Leifsonia xyli subsp. xyli (strain CTCB07), this protein is Diaminopimelate epimerase.